The chain runs to 320 residues: Mitochondrial glutamate carrier 2 (320 aa).

Solcar repeat units lie at residues 11-97 (LSIS…LRQL), 105-215 (RNLK…LNQL), and 224-313 (ASFT…GIGE). 3 helical membrane passes run 17 to 37 (LINGGIAGLVGVTCVFPIDLA), 66 to 86 (FLGMYRGAAVNLTLVTPEKAI), and 110 to 128 (EMLAGCGAGICQVVITCPM). Phosphoserine is present on S150. 3 consecutive transmembrane segments (helical) span residues 190-210 (GLGATLLRDIPFSIIYFPLFA), 230-250 (FVAGCTAGSVAAVAVTPLDVL), and 293-313 (ALVIAPLFGIAQGVYFIGIGE).

It belongs to the mitochondrial carrier (TC 2.A.29) family.

It is found in the mitochondrion inner membrane. It catalyses the reaction L-glutamate(in) + H(+)(in) = L-glutamate(out) + H(+)(out). Its function is as follows. Responsible for the transport of glutamate from the cytosol into the mitochondrial matrix with the concomitant import of a proton (symport system). This Mus musculus (Mouse) protein is Mitochondrial glutamate carrier 2 (Slc25a18).